Here is a 503-residue protein sequence, read N- to C-terminus: Endoglycoceramidase (503 aa).

The signal sequence occupies residues 1 to 21 (MAETQPLVFVLMSISAILTAG). Asparagine 72, asparagine 108, and asparagine 205 each carry an N-linked (GlcNAc...) asparagine glycan. Glutamate 239 (proton donor) is an active-site residue. Asparagine 307, asparagine 409, and asparagine 485 each carry an N-linked (GlcNAc...) asparagine glycan.

The protein belongs to the glycosyl hydrolase 5 (cellulase A) family.

It localises to the secreted. The protein resides in the nematocyst. It carries out the reaction an oligoglycosyl-(1-&gt;4)-beta-D-glucosyl-(1&lt;-&gt;1)-ceramide + H2O = an oligoglycosyl-(1-&gt;4)-D-glucose + an N-acyl-sphingoid base. With respect to regulation, completely inhibited by Hg(2+). Cu(2+) and zinc have no effect on enzyme activity. Lithium, potassium, manganese, Ni(2+), calcium, magnesium and EDTA have no significant effect on enzyme activity. Enzyme requires presence of detergents such as Triton X-100 and Lubrol PX for the hydrolysis of glycosphingolipids. Taurodeoxycholate strongly inhibits the enzyme activity and SDS completely inhibits the enzyme activity. In terms of biological role, hydrolysis of the glycosidic linkage between oligosaccharides and ceramides of glycosphingolipids, especially b-series polysialogangliosides. The polypeptide is Endoglycoceramidase (Cyanea nozakii (Jellyfish)).